The following is a 193-amino-acid chain: Auxin-responsive protein IAA23 (193 aa).

A compositionally biased stretch (polar residues) spans 1-12 (MSTSSGADSSPP). Residues 1-66 (MSTSSGADSS…SPKARAVGWP (66 aa)) form a disordered region. Residues 21–36 (TALTLALPGSSSSSSS) are compositionally biased toward low complexity. Residues 23 to 27 (LTLAL) carry the EAR-like (transcriptional repression) motif. The span at 39–53 (DPERKRAAHADHADA) shows a compositional bias: basic and acidic residues. The region spanning 83-191 (AKLVKVAVDG…EAVNLSPRRS (109 aa)) is the PB1 domain.

Belongs to the Aux/IAA family. In terms of assembly, homodimers and heterodimers. Highly expressed in roots. Expressed in seedlings.

The protein localises to the nucleus. Functionally, aux/IAA proteins are short-lived transcriptional factors that function as repressors of early auxin response genes at low auxin concentrations. In Oryza sativa subsp. japonica (Rice), this protein is Auxin-responsive protein IAA23 (IAA23).